The chain runs to 297 residues: HTH-type transcriptional regulator ArgP (297 aa).

In terms of domain architecture, HTH lysR-type spans 4-60; the sequence is PDYRTLQALDAVIRERGFERAAQKLCITQSAVSQRIKQLENMFGQPLLVRTVPPRPT. A DNA-binding region (H-T-H motif) is located at residues 21–40; that stretch reads FERAAQKLCITQSAVSQRIK.

It belongs to the LysR transcriptional regulatory family. Homodimer.

Functionally, controls the transcription of genes involved in arginine and lysine metabolism. This is HTH-type transcriptional regulator ArgP from Salmonella arizonae (strain ATCC BAA-731 / CDC346-86 / RSK2980).